The primary structure comprises 607 residues: 2-isopropylmalate synthase (607 aa).

Residues M1 to Q10 show a composition bias toward polar residues. The segment at M1–R40 is disordered. One can recognise a Pyruvate carboxyltransferase domain in the interval P75 to D349. D84, H288, H290, and N324 together coordinate Mg(2+). Residues P491–R607 are regulatory domain.

It belongs to the alpha-IPM synthase/homocitrate synthase family. LeuA type 2 subfamily. Homodimer. It depends on Mg(2+) as a cofactor.

Its subcellular location is the cytoplasm. It carries out the reaction 3-methyl-2-oxobutanoate + acetyl-CoA + H2O = (2S)-2-isopropylmalate + CoA + H(+). Its pathway is amino-acid biosynthesis; L-leucine biosynthesis; L-leucine from 3-methyl-2-oxobutanoate: step 1/4. Its function is as follows. Catalyzes the condensation of the acetyl group of acetyl-CoA with 3-methyl-2-oxobutanoate (2-ketoisovalerate) to form 3-carboxy-3-hydroxy-4-methylpentanoate (2-isopropylmalate). This is 2-isopropylmalate synthase from Mycobacterium leprae (strain TN).